We begin with the raw amino-acid sequence, 131 residues long: uncharacterized protein (131 aa).

A run of 2 helical transmembrane segments spans residues 68–88 (VVRATPIIGPYAGLPVIVAPI) and 94–114 (VLGAIGVVDITAGIFEDIVAI).

It is found in the cell membrane. This is an uncharacterized protein from Methanocaldococcus jannaschii (strain ATCC 43067 / DSM 2661 / JAL-1 / JCM 10045 / NBRC 100440) (Methanococcus jannaschii).